Consider the following 75-residue polypeptide: Translation initiation factor IF-1 (75 aa).

One can recognise an S1-like domain in the interval 1–75 (MANLPKEQKL…SKGRIVYRFK (75 aa)).

The protein belongs to the IF-1 family. As to quaternary structure, component of the 30S ribosomal translation pre-initiation complex which assembles on the 30S ribosome in the order IF-2 and IF-3, IF-1 and N-formylmethionyl-tRNA(fMet); mRNA recruitment can occur at any time during PIC assembly.

It is found in the cytoplasm. In terms of biological role, one of the essential components for the initiation of protein synthesis. Stabilizes the binding of IF-2 and IF-3 on the 30S subunit to which N-formylmethionyl-tRNA(fMet) subsequently binds. Helps modulate mRNA selection, yielding the 30S pre-initiation complex (PIC). Upon addition of the 50S ribosomal subunit IF-1, IF-2 and IF-3 are released leaving the mature 70S translation initiation complex. The sequence is that of Translation initiation factor IF-1 from Mesomycoplasma hyopneumoniae (strain 232) (Mycoplasma hyopneumoniae).